The sequence spans 505 residues: Putative ribose/galactose/methyl galactoside import ATP-binding protein 1 (505 aa).

2 consecutive ABC transporter domains span residues 10 to 245 and 256 to 501; these read LRLE…VGRS and RPTD…SGYG. Position 42-49 (42-49) interacts with ATP; it reads GENGAGKS.

It belongs to the ABC transporter superfamily. Carbohydrate importer 2 (CUT2) (TC 3.A.1.2) family.

It localises to the cell inner membrane. The enzyme catalyses D-ribose(out) + ATP + H2O = D-ribose(in) + ADP + phosphate + H(+). It catalyses the reaction D-galactose(out) + ATP + H2O = D-galactose(in) + ADP + phosphate + H(+). Functionally, part of an ABC transporter complex involved in carbohydrate import. Could be involved in ribose, galactose and/or methyl galactoside import. Responsible for energy coupling to the transport system. The chain is Putative ribose/galactose/methyl galactoside import ATP-binding protein 1 from Agrobacterium fabrum (strain C58 / ATCC 33970) (Agrobacterium tumefaciens (strain C58)).